The primary structure comprises 129 residues: Small ribosomal subunit protein uS8 (129 aa).

The protein belongs to the universal ribosomal protein uS8 family. As to quaternary structure, part of the 30S ribosomal subunit.

In terms of biological role, one of the primary rRNA binding proteins, it binds directly to 16S rRNA central domain where it helps coordinate assembly of the platform of the 30S subunit. This is Small ribosomal subunit protein uS8 from Nanoarchaeum equitans (strain Kin4-M).